Reading from the N-terminus, the 300-residue chain is MLIRAFIPAHITAFFVPVFHEEPLKAGSLGAGVNLSKGTNVFASIETGTLERHIHVAFNGEPVKREEAEITYYVAEKLVPKDFLGEVEVWQYFDFPNGYGFGNSAGGALGTALALSYAFGGTWLRAAQLAHEAEVKHKGGLGDVIGQLAGGIEVRIKPGGPGIGVTDNLFFEDYKVLVVPLGRLSTREVLDGDVVKAIEVEGRKALEELLKEPKPERMMVLARNFAEKTGLLPGELSEIARELDKVLKNPSSMIMLGKGLFALVRDEEAEKAKQLLSDMNLPYDIAEIYTERPKVGRWVG.

The protein belongs to the GHMP kinase family. PoK subfamily. In terms of assembly, homodimer.

It catalyses the reaction (R)-pantoate + ATP = (R)-4-phosphopantoate + ADP + H(+). It participates in cofactor biosynthesis; coenzyme A biosynthesis. With respect to regulation, moderately stimulated in the presence of potassium cations. Inhibited by increasing concentrations of pantoate. Activity is not affected by CoA/acetyl-CoA. Its function is as follows. Phosphorylates (R)-pantoate to form (R)-4-phosphopantoate in the CoA biosynthesis pathway. Displays broad nucleotide specificity and utilizes ATP, GTP, UTP, and CTP with comparable catalytic efficiencies. This chain is Pantoate kinase, found in Thermococcus kodakarensis (strain ATCC BAA-918 / JCM 12380 / KOD1) (Pyrococcus kodakaraensis (strain KOD1)).